The chain runs to 396 residues: Elongation factor Tu (396 aa).

The tr-type G domain maps to 10 to 206 (KPHVNVGTIG…AMDEYIPTPE (197 aa)). The interval 19-26 (GHVDHGKT) is G1. GTP is bound at residue 19 to 26 (GHVDHGKT). Thr26 is a Mg(2+) binding site. The G2 stretch occupies residues 60 to 64 (GITIA). The segment at 81-84 (DCPG) is G3. Residues 81–85 (DCPGH) and 136–139 (NKAD) each bind GTP. The tract at residues 136–139 (NKAD) is G4. The tract at residues 174 to 176 (SAL) is G5.

Belongs to the TRAFAC class translation factor GTPase superfamily. Classic translation factor GTPase family. EF-Tu/EF-1A subfamily. As to quaternary structure, monomer.

It is found in the cytoplasm. It catalyses the reaction GTP + H2O = GDP + phosphate + H(+). Functionally, GTP hydrolase that promotes the GTP-dependent binding of aminoacyl-tRNA to the A-site of ribosomes during protein biosynthesis. This is Elongation factor Tu from Alkalilimnicola ehrlichii (strain ATCC BAA-1101 / DSM 17681 / MLHE-1).